The sequence spans 361 residues: Riboflavin biosynthesis protein RibD (361 aa).

The CMP/dCMP-type deaminase domain occupies 1-122 (MEEYYMKLAL…MMKEAGIEVR (122 aa)). The tract at residues 1-144 (MEEYYMKLAL…EKFLHFMRTG (144 aa)) is deaminase. H49 is a Zn(2+) binding site. Catalysis depends on E51, which acts as the Proton donor. Positions 74 and 83 each coordinate Zn(2+). Residues 145-361 (LPYVTLKAAA…IKLTAKPTKE (217 aa)) are reductase. Residue A153 coordinates NADP(+). S167 contributes to the substrate binding site. W169 lines the NADP(+) pocket. A substrate-binding site is contributed by R183. NADP(+)-binding residues include T195 and D199. Substrate is bound by residues L203 and R206. T221 contacts NADP(+). Residue E290 participates in substrate binding. An NADP(+)-binding site is contributed by 292 to 298 (GSAVHGS).

It in the N-terminal section; belongs to the cytidine and deoxycytidylate deaminase family. In the C-terminal section; belongs to the HTP reductase family. Homotetramer. Zn(2+) serves as cofactor.

The catalysed reaction is 2,5-diamino-6-hydroxy-4-(5-phosphoribosylamino)-pyrimidine + H2O + H(+) = 5-amino-6-(5-phospho-D-ribosylamino)uracil + NH4(+). It carries out the reaction 5-amino-6-(5-phospho-D-ribitylamino)uracil + NADP(+) = 5-amino-6-(5-phospho-D-ribosylamino)uracil + NADPH + H(+). The protein operates within cofactor biosynthesis; riboflavin biosynthesis; 5-amino-6-(D-ribitylamino)uracil from GTP: step 2/4. It functions in the pathway cofactor biosynthesis; riboflavin biosynthesis; 5-amino-6-(D-ribitylamino)uracil from GTP: step 3/4. Its function is as follows. Converts 2,5-diamino-6-(ribosylamino)-4(3h)-pyrimidinone 5'-phosphate into 5-amino-6-(ribosylamino)-2,4(1h,3h)-pyrimidinedione 5'-phosphate. The chain is Riboflavin biosynthesis protein RibD (ribD) from Bacillus subtilis (strain 168).